Reading from the N-terminus, the 365-residue chain is Histidinol-phosphate aminotransferase (365 aa).

N6-(pyridoxal phosphate)lysine is present on lysine 220.

Belongs to the class-II pyridoxal-phosphate-dependent aminotransferase family. Histidinol-phosphate aminotransferase subfamily. In terms of assembly, homodimer. Pyridoxal 5'-phosphate is required as a cofactor.

It carries out the reaction L-histidinol phosphate + 2-oxoglutarate = 3-(imidazol-4-yl)-2-oxopropyl phosphate + L-glutamate. Its pathway is amino-acid biosynthesis; L-histidine biosynthesis; L-histidine from 5-phospho-alpha-D-ribose 1-diphosphate: step 7/9. This is Histidinol-phosphate aminotransferase (hisC) from Xylella fastidiosa (strain Temecula1 / ATCC 700964).